We begin with the raw amino-acid sequence, 123 residues long: UPF0102 protein DR_2282 (123 aa).

The protein belongs to the UPF0102 family.

The sequence is that of UPF0102 protein DR_2282 from Deinococcus radiodurans (strain ATCC 13939 / DSM 20539 / JCM 16871 / CCUG 27074 / LMG 4051 / NBRC 15346 / NCIMB 9279 / VKM B-1422 / R1).